We begin with the raw amino-acid sequence, 22 residues long: thr operon leader peptide (22 aa).

This sequence belongs to the thr operon leader peptide family.

Its function is as follows. This protein is involved in control of the biosynthesis of threonine. This chain is thr operon leader peptide, found in Yersinia pestis bv. Antiqua (strain Antiqua).